The primary structure comprises 326 residues: Acetyl-coenzyme A carboxylase carboxyl transferase subunit beta (326 aa).

The region spanning leucine 32 to asparagine 301 is the CoA carboxyltransferase N-terminal domain. Cysteine 36, cysteine 39, cysteine 55, and cysteine 58 together coordinate Zn(2+). The C4-type zinc-finger motif lies at cysteine 36–cysteine 58.

Belongs to the AccD/PCCB family. Acetyl-CoA carboxylase is a heterohexamer composed of biotin carboxyl carrier protein (AccB), biotin carboxylase (AccC) and two subunits each of ACCase subunit alpha (AccA) and ACCase subunit beta (AccD). The cofactor is Zn(2+).

The protein resides in the cytoplasm. It catalyses the reaction N(6)-carboxybiotinyl-L-lysyl-[protein] + acetyl-CoA = N(6)-biotinyl-L-lysyl-[protein] + malonyl-CoA. Its pathway is lipid metabolism; malonyl-CoA biosynthesis; malonyl-CoA from acetyl-CoA: step 1/1. Component of the acetyl coenzyme A carboxylase (ACC) complex. Biotin carboxylase (BC) catalyzes the carboxylation of biotin on its carrier protein (BCCP) and then the CO(2) group is transferred by the transcarboxylase to acetyl-CoA to form malonyl-CoA. This Synechocystis sp. (strain ATCC 27184 / PCC 6803 / Kazusa) protein is Acetyl-coenzyme A carboxylase carboxyl transferase subunit beta.